Reading from the N-terminus, the 367-residue chain is D-alanine--D-alanine ligase (367 aa).

An ATP-grasp domain is found at 145-351 (KRLLRDAGLP…QPALMDELVA (207 aa)). 174–229 (RAVGSSELFVKPANLGSSVGISKTRDAAEFEAACQLALRFDRKILIERCIAPVREI) provides a ligand contact to ATP. Mg(2+) is bound by residues aspartate 306, glutamate 318, and asparagine 320.

Belongs to the D-alanine--D-alanine ligase family. It depends on Mg(2+) as a cofactor. Requires Mn(2+) as cofactor.

Its subcellular location is the cytoplasm. It catalyses the reaction 2 D-alanine + ATP = D-alanyl-D-alanine + ADP + phosphate + H(+). It participates in cell wall biogenesis; peptidoglycan biosynthesis. In terms of biological role, cell wall formation. This chain is D-alanine--D-alanine ligase, found in Bradyrhizobium sp. (strain ORS 278).